A 545-amino-acid chain; its full sequence is Probable protein kinase UbiB (545 aa).

Positions 123–501 (DFEPIALASA…QIKQRQSQYL (379 aa)) constitute a Protein kinase domain. Residues 129–137 (LASASIAQV) and Lys152 each bind ATP. Asp287 functions as the Proton acceptor in the catalytic mechanism. Residues 508–528 (LFLCGSLFLLSGLANIPWLFI) traverse the membrane as a helical segment.

This sequence belongs to the ABC1 family. UbiB subfamily.

The protein localises to the cell inner membrane. It participates in cofactor biosynthesis; ubiquinone biosynthesis [regulation]. In terms of biological role, is probably a protein kinase regulator of UbiI activity which is involved in aerobic coenzyme Q (ubiquinone) biosynthesis. This Photorhabdus laumondii subsp. laumondii (strain DSM 15139 / CIP 105565 / TT01) (Photorhabdus luminescens subsp. laumondii) protein is Probable protein kinase UbiB.